Here is a 133-residue protein sequence, read N- to C-terminus: Small ribosomal subunit protein eS8 (133 aa).

The segment at 1–34 (MGVWHGRSLRKPTGGRIRPHRKKRKFEMGNPPTE) is disordered.

Belongs to the eukaryotic ribosomal protein eS8 family. Part of the 30S ribosomal subunit.

This chain is Small ribosomal subunit protein eS8, found in Methanopyrus kandleri (strain AV19 / DSM 6324 / JCM 9639 / NBRC 100938).